A 689-amino-acid polypeptide reads, in one-letter code: Glycine--tRNA ligase beta subunit (689 aa).

It belongs to the class-II aminoacyl-tRNA synthetase family. In terms of assembly, tetramer of two alpha and two beta subunits.

It localises to the cytoplasm. The enzyme catalyses tRNA(Gly) + glycine + ATP = glycyl-tRNA(Gly) + AMP + diphosphate. The sequence is that of Glycine--tRNA ligase beta subunit from Klebsiella pneumoniae (strain 342).